Here is a 459-residue protein sequence, read N- to C-terminus: ATP synthase subunit beta (459 aa).

Position 149–156 (149–156) interacts with ATP; the sequence is GGAGVGKT.

It belongs to the ATPase alpha/beta chains family. As to quaternary structure, F-type ATPases have 2 components, CF(1) - the catalytic core - and CF(0) - the membrane proton channel. CF(1) has five subunits: alpha(3), beta(3), gamma(1), delta(1), epsilon(1). CF(0) has three main subunits: a(1), b(2) and c(9-12). The alpha and beta chains form an alternating ring which encloses part of the gamma chain. CF(1) is attached to CF(0) by a central stalk formed by the gamma and epsilon chains, while a peripheral stalk is formed by the delta and b chains.

The protein resides in the cell inner membrane. It catalyses the reaction ATP + H2O + 4 H(+)(in) = ADP + phosphate + 5 H(+)(out). Its function is as follows. Produces ATP from ADP in the presence of a proton gradient across the membrane. The catalytic sites are hosted primarily by the beta subunits. The protein is ATP synthase subunit beta of Pseudomonas savastanoi pv. phaseolicola (strain 1448A / Race 6) (Pseudomonas syringae pv. phaseolicola (strain 1448A / Race 6)).